The primary structure comprises 419 residues: L-rhamnose isomerase (419 aa).

3 residues coordinate Mn(2+): His-262, Asp-294, and Asp-296.

It belongs to the rhamnose isomerase family. As to quaternary structure, homotetramer. Mn(2+) is required as a cofactor.

The protein resides in the cytoplasm. It catalyses the reaction L-rhamnopyranose = L-rhamnulose. It functions in the pathway carbohydrate degradation; L-rhamnose degradation; glycerone phosphate from L-rhamnose: step 1/3. Catalyzes the interconversion of L-rhamnose and L-rhamnulose. The protein is L-rhamnose isomerase of Escherichia coli (strain K12 / MC4100 / BW2952).